The sequence spans 121 residues: Small ribosomal subunit protein uS13 (121 aa).

Residues 94 to 121 (GLPMRGQRTRTNARTRKGPRKAAAALKK) are disordered.

The protein belongs to the universal ribosomal protein uS13 family. As to quaternary structure, part of the 30S ribosomal subunit. Forms a loose heterodimer with protein S19. Forms two bridges to the 50S subunit in the 70S ribosome.

Its function is as follows. Located at the top of the head of the 30S subunit, it contacts several helices of the 16S rRNA. In the 70S ribosome it contacts the 23S rRNA (bridge B1a) and protein L5 of the 50S subunit (bridge B1b), connecting the 2 subunits; these bridges are implicated in subunit movement. Contacts the tRNAs in the A and P-sites. The protein is Small ribosomal subunit protein uS13 of Polaromonas sp. (strain JS666 / ATCC BAA-500).